Reading from the N-terminus, the 207-residue chain is ATP-dependent Clp protease proteolytic subunit (207 aa).

The active-site Nucleophile is the serine 112. Histidine 137 is an active-site residue.

This sequence belongs to the peptidase S14 family. Fourteen ClpP subunits assemble into 2 heptameric rings which stack back to back to give a disk-like structure with a central cavity, resembling the structure of eukaryotic proteasomes.

Its subcellular location is the cytoplasm. The catalysed reaction is Hydrolysis of proteins to small peptides in the presence of ATP and magnesium. alpha-casein is the usual test substrate. In the absence of ATP, only oligopeptides shorter than five residues are hydrolyzed (such as succinyl-Leu-Tyr-|-NHMec, and Leu-Tyr-Leu-|-Tyr-Trp, in which cleavage of the -Tyr-|-Leu- and -Tyr-|-Trp bonds also occurs).. Its function is as follows. Cleaves peptides in various proteins in a process that requires ATP hydrolysis. Has a chymotrypsin-like activity. Plays a major role in the degradation of misfolded proteins. This is ATP-dependent Clp protease proteolytic subunit from Bacteroides fragilis (strain ATCC 25285 / DSM 2151 / CCUG 4856 / JCM 11019 / LMG 10263 / NCTC 9343 / Onslow / VPI 2553 / EN-2).